The sequence spans 181 residues: uncharacterized protein (181 aa).

Residues 126 to 148 (SYKDKEEEEDEDPEEDDDDPRVQ) form a disordered region. Residues 131–144 (EEEEDEDPEEDDDD) are compositionally biased toward acidic residues.

It belongs to the chlamydial CPn_0422/CT_273/TC_0545 family.

This is an uncharacterized protein from Chlamydia pneumoniae (Chlamydophila pneumoniae).